We begin with the raw amino-acid sequence, 124 residues long: Ragulator complex protein LAMTOR3 homolog (124 aa).

It belongs to the LAMTOR3 family. Part of the Ragulator complex composed of Lamtor3, Lamtor2, CG14184, CG14812, and Lamtor4.

Its function is as follows. Regulator of the TOR pathway, a signaling cascade that promotes cell growth in response to growth factors, energy levels, and amino acids. As part of the Ragulator complex, may activate the TOR signaling cascade in response to amino acids. This Drosophila melanogaster (Fruit fly) protein is Ragulator complex protein LAMTOR3 homolog.